We begin with the raw amino-acid sequence, 129 residues long: Follitropin subunit beta (129 aa).

Residues 1-18 (MKSIQFCFFFCCWKAICC) form the signal peptide. Intrachain disulfides connect C21–C69, C35–C84, C38–C122, C46–C100, C50–C102, and C105–C112. 2 N-linked (GlcNAc...) asparagine glycosylation sites follow: N25 and N42.

It belongs to the glycoprotein hormones subunit beta family. In terms of assembly, heterodimer. The active follitropin is a heterodimer composed of an alpha chain/CGA shared with other hormones and a unique beta chain/FSHB shown here.

The protein resides in the secreted. Its function is as follows. Together with the alpha chain CGA constitutes follitropin, the follicle-stimulating hormone, and provides its biological specificity to the hormone heterodimer. Binds FSHR, a G protein-coupled receptor, on target cells to activate downstream signaling pathways. Follitropin is involved in follicle development and spermatogenesis in reproductive organs. In Cavia porcellus (Guinea pig), this protein is Follitropin subunit beta (FSHB).